The primary structure comprises 169 residues: Peptide deformylase (169 aa).

2 residues coordinate Fe cation: cysteine 91 and histidine 133. The active site involves glutamate 134. Histidine 137 contacts Fe cation.

This sequence belongs to the polypeptide deformylase family. It depends on Fe(2+) as a cofactor.

The catalysed reaction is N-terminal N-formyl-L-methionyl-[peptide] + H2O = N-terminal L-methionyl-[peptide] + formate. Removes the formyl group from the N-terminal Met of newly synthesized proteins. Requires at least a dipeptide for an efficient rate of reaction. N-terminal L-methionine is a prerequisite for activity but the enzyme has broad specificity at other positions. This chain is Peptide deformylase, found in Salmonella agona (strain SL483).